The sequence spans 822 residues: Putative endoplasmic reticulum metallopeptidase 1 (822 aa).

Residues 1–14 (MVLVCASSSKCKRN) lie on the Cytoplasmic side of the membrane. A helical membrane pass occupies residues 15–35 (TFLQLAMVLFAVVMARIALYF). The Lumenal portion of the chain corresponds to 36–365 (HNHLDEPLVD…FNSLFFMYSK (330 aa)). A glycan (N-linked (GlcNAc...) asparagine) is linked at N146. Residues H161 and D173 each contribute to the Zn(2+) site. E207 acts as the Proton acceptor in catalysis. 2 residues coordinate Zn(2+): E208 and E234. A glycan (N-linked (GlcNAc...) asparagine) is linked at N291. Zn(2+) is bound at residue H307. A helical transmembrane segment spans residues 366 to 384 (LTSKILNTLVGGLGILLTL). Residues 385 to 392 (RGSEGSFT) lie on the Cytoplasmic side of the membrane. Residues 393–413 (VALIAQVISIAGIFVIPNIWA) traverse the membrane as a helical segment. Residues 414–431 (YILGNVLDCGMSWFRNEY) lie on the Lumenal side of the membrane. A helical transmembrane segment spans residues 432–452 (WPLFIYLPAIFASLFFTESLF). Over 453–463 (KRSEHLALRAT) the chain is Cytoplasmic. A helical membrane pass occupies residues 464–484 (IFIFSLLTFIPLPSAYLFTII). D485 is a topological domain (lumenal). A helical membrane pass occupies residues 486 to 506 (FFMVFALFLNDKILAKPGTVH). Topologically, residues 507–514 (PLTYFIGS) are cytoplasmic. A helical membrane pass occupies residues 515-535 (IGAMTVGFESAINLLEIFVPL). The Lumenal segment spans residues 536 to 547 (TGRIGTDKVADN). A helical membrane pass occupies residues 548–568 (VVATVCVCGFNIYFPLMSPWI). Over 569–575 (QRFRSRC) the chain is Cytoplasmic. A helical membrane pass occupies residues 576–596 (CFRLGLLFSIFVVGFSSFILA). Topologically, residues 597 to 822 (KQDTYYDSLH…GVVSGNFKLE (226 aa)) are lumenal. Residues N617, N682, N706, and N758 are each glycosylated (N-linked (GlcNAc...) asparagine).

This sequence belongs to the peptidase M28 family. M28B subfamily. The cofactor is Zn(2+).

Its subcellular location is the endoplasmic reticulum membrane. The polypeptide is Putative endoplasmic reticulum metallopeptidase 1 (Schizosaccharomyces pombe (strain 972 / ATCC 24843) (Fission yeast)).